Reading from the N-terminus, the 1916-residue chain is Diacylglycerol kinase eta (1916 aa).

Residues 1–36 (MAHIKLDTLDVVQRPGTTRRSNSNSGRSSACSSGSL) are disordered. The span at 19–36 (RRSNSNSGRSSACSSGSL) shows a compositional bias: low complexity. The PH domain occupies 82–175 (AIIKEGFLLK…WLGSLKTATT (94 aa)). 2 consecutive Phorbol-ester/DAG-type zinc fingers follow at residues 195 to 245 (HHHW…IANC) and 268 to 319 (PHQW…AVAC). Positions 350–486 (GNFSPLLVFV…DRWSIMVFEK (137 aa)) constitute a DAGKc domain. A compositionally biased stretch (basic and acidic residues) spans 623–644 (DEINTKERRSSRSLRSSEKEAL). 4 disordered regions span residues 623–648 (DEIN…QSRA), 846–874 (DRGK…KEDN), 1018–1067 (TLCS…DDNP), and 1183–1214 (TSTS…SVKP). Residues 1853-1916 (WSVNEVVTWL…LQAIKDLSEN (64 aa)) form the SAM domain.

The protein belongs to the eukaryotic diacylglycerol kinase family.

The protein resides in the cytoplasm. The catalysed reaction is a 1,2-diacyl-sn-glycerol + ATP = a 1,2-diacyl-sn-glycero-3-phosphate + ADP + H(+). Phosphorylates diacylglycerol (DAG) to generate phosphatidic acid (PA). This is Diacylglycerol kinase eta from Drosophila ananassae (Fruit fly).